Here is a 132-residue protein sequence, read N- to C-terminus: Transmembrane protein 170B (132 aa).

Over 1–37 (MKAEGGDHSMINLSVQQVLSLWAHGTVLRNLTEMWYW) the chain is Extracellular. Asn-12 carries N-linked (GlcNAc...) asparagine glycosylation. A helical membrane pass occupies residues 38 to 58 (IFLWALFSSLFVHGAAGVLMF). The Cytoplasmic segment spans residues 59–68 (VMLQRHRQGR). A helical membrane pass occupies residues 69-89 (VISVIAVSIGFLASVTGAMIT). Over 90–104 (SAAVAGIYRVAGKNM) the chain is Extracellular. The chain crosses the membrane as a helical span at residues 105–125 (APLEALVWGVGQTVLTLIISF). At 126–132 (SRILATL) the chain is on the cytoplasmic side.

It belongs to the TMEM170 family. In terms of assembly, interacts with CTNNB1. In terms of tissue distribution, expressed in normal breast tissues. Down-regulated in breast cancer cells (at protein level).

It localises to the cell membrane. In terms of biological role, negatively regulates the canonical Wnt signaling in breast cancer cells. Exerts an inhibitory effect on breast cancer growth by inhibiting CTNNB1 stabilization and nucleus translocation, which reduces the activity of Wnt targets. This Homo sapiens (Human) protein is Transmembrane protein 170B (TMEM170B).